Consider the following 560-residue polypeptide: Membrane protein insertase YidC (560 aa).

The chain crosses the membrane as a helical span at residues 1–21; that stretch reads MDIKRTILIAALAVVSYVMVL. The disordered stretch occupies residues 42-66; it reads VAPGLPDGVPAGNNGASADVPSANA. 5 helical membrane-spanning segments follow: residues 341–361, 367–387, 437–457, 468–488, and 515–535; these read LELTVDYGFLWFIAQPIFWLL, LLGNWGWSIIVLTMLIKGLFF, LGGCLPILVQMPVFLALYWVL, WILWITDLSIKDPFFILPIIM, and PIIFTFFFLWFPAGLVLYWVV.

The protein belongs to the OXA1/ALB3/YidC family. Type 1 subfamily. Interacts with the Sec translocase complex via SecD. Specifically interacts with transmembrane segments of nascent integral membrane proteins during membrane integration.

It is found in the cell inner membrane. Its function is as follows. Required for the insertion and/or proper folding and/or complex formation of integral membrane proteins into the membrane. Involved in integration of membrane proteins that insert both dependently and independently of the Sec translocase complex, as well as at least some lipoproteins. Aids folding of multispanning membrane proteins. This is Membrane protein insertase YidC from Pseudomonas putida (strain ATCC 700007 / DSM 6899 / JCM 31910 / BCRC 17059 / LMG 24140 / F1).